An 841-amino-acid chain; its full sequence is Protein translocase subunit SecA (841 aa).

ATP contacts are provided by residues Q85, 103 to 107 (GEGKT), and D492. Positions 786-812 (REEVVQGQTTAHQPQDGDEAKQAKKAP) are disordered. Residues C825, C827, C836, and C837 each coordinate Zn(2+).

This sequence belongs to the SecA family. As to quaternary structure, monomer and homodimer. Part of the essential Sec protein translocation apparatus which comprises SecA, SecYEG and auxiliary proteins SecDF. Other proteins may also be involved. The cofactor is Zn(2+).

The protein localises to the cell membrane. The protein resides in the cytoplasm. It catalyses the reaction ATP + H2O + cellular proteinSide 1 = ADP + phosphate + cellular proteinSide 2.. Functionally, part of the Sec protein translocase complex. Interacts with the SecYEG preprotein conducting channel. Has a central role in coupling the hydrolysis of ATP to the transfer of proteins into and across the cell membrane, serving as an ATP-driven molecular motor driving the stepwise translocation of polypeptide chains across the membrane. The polypeptide is Protein translocase subunit SecA (Bacillus velezensis (strain DSM 23117 / BGSC 10A6 / LMG 26770 / FZB42) (Bacillus amyloliquefaciens subsp. plantarum)).